The following is a 553-amino-acid chain: Dihydroxy-acid dehydratase (553 aa).

Residue Asp78 participates in Mg(2+) binding. A [2Fe-2S] cluster-binding site is contributed by Cys119. Mg(2+)-binding residues include Asp120 and Lys121. At Lys121 the chain carries N6-carboxylysine. Cys193 is a binding site for [2Fe-2S] cluster. Glu441 serves as a coordination point for Mg(2+). Catalysis depends on Ser467, which acts as the Proton acceptor.

This sequence belongs to the IlvD/Edd family. In terms of assembly, homodimer. The cofactor is [2Fe-2S] cluster. Requires Mg(2+) as cofactor.

The enzyme catalyses (2R)-2,3-dihydroxy-3-methylbutanoate = 3-methyl-2-oxobutanoate + H2O. It carries out the reaction (2R,3R)-2,3-dihydroxy-3-methylpentanoate = (S)-3-methyl-2-oxopentanoate + H2O. It functions in the pathway amino-acid biosynthesis; L-isoleucine biosynthesis; L-isoleucine from 2-oxobutanoate: step 3/4. Its pathway is amino-acid biosynthesis; L-valine biosynthesis; L-valine from pyruvate: step 3/4. In terms of biological role, functions in the biosynthesis of branched-chain amino acids. Catalyzes the dehydration of (2R,3R)-2,3-dihydroxy-3-methylpentanoate (2,3-dihydroxy-3-methylvalerate) into 2-oxo-3-methylpentanoate (2-oxo-3-methylvalerate) and of (2R)-2,3-dihydroxy-3-methylbutanoate (2,3-dihydroxyisovalerate) into 2-oxo-3-methylbutanoate (2-oxoisovalerate), the penultimate precursor to L-isoleucine and L-valine, respectively. This chain is Dihydroxy-acid dehydratase, found in Geobacter sp. (strain M21).